Reading from the N-terminus, the 274-residue chain is Penicillin-insensitive murein endopeptidase (274 aa).

An N-terminal signal peptide occupies residues Met1–Ala19. Cystine bridges form between Cys44/Cys265, Cys187/Cys235, and Cys216/Cys223. His110, His113, Asp120, Asp147, His150, and His211 together coordinate Zn(2+).

The protein belongs to the peptidase M74 family. In terms of assembly, dimer. Zn(2+) serves as cofactor.

It localises to the periplasm. Murein endopeptidase that cleaves the D-alanyl-meso-2,6-diamino-pimelyl amide bond that connects peptidoglycan strands. Likely plays a role in the removal of murein from the sacculus. The protein is Penicillin-insensitive murein endopeptidase of Shigella sonnei (strain Ss046).